A 607-amino-acid chain; its full sequence is Vacuolar fusion protein MON1 homolog (607 aa).

Residues 1-14 (MATSDSRSSPSSSD) show a composition bias toward low complexity. 2 disordered regions span residues 1-173 (MATS…DDAS) and 463-486 (PIDRRRRSSTTNQEQDSPGPDISV). Residues 21–55 (NPSSDPETNSERVQSQLESMNLSQPSEVSDGSHTE) show a composition bias toward polar residues.

It belongs to the MON1/SAND family. As to quaternary structure, interacts with CCZ1A, CCZ1B and RABF2B. As to expression, widely expressed at stable levels.

The protein resides in the endosome. Its subcellular location is the prevacuolar compartment. Its function is as follows. Plays an important role in membrane trafficking through the secretory apparatus. In complex with CCZ1, acts as a guanine exchange factor (GEF) for RABG3F of the Rab7 protein family. Promotes the exchange of GDP to GTP, converting RABG3F from an inactive GDP-bound form into an active GTP-bound form. The RABG3F active form is involved in protein trafficking from prevacuolar compartments (PVCs) to vacuoles. May serve as a linker between Rab5 and Rab7 protein families in PVCs and mediate PVC maturation. The protein is Vacuolar fusion protein MON1 homolog of Arabidopsis thaliana (Mouse-ear cress).